Consider the following 396-residue polypeptide: Decapping and exoribonuclease protein (396 aa).

A compositionally biased stretch (basic and acidic residues) spans 1 to 20 (MDPRGTKRGAEKTEVAEPRN). A disordered region spans residues 1-37 (MDPRGTKRGAEKTEVAEPRNKLPRPAPSLPTDPALYS). Substrate-binding positions include R58, E101, and 131–133 (WRG). Mg(2+) is bound at residue E192. The substrate site is built by C217 and E234. Mg(2+) contacts are provided by E234, D236, E253, and L254. K255 and Q280 together coordinate substrate. Position 392 is a phosphothreonine (T392). S394 bears the Phosphoserine mark.

This sequence belongs to the DXO/Dom3Z family. It depends on Mg(2+) as a cofactor. As to expression, ubiquitously expressed.

The protein localises to the nucleus. It catalyses the reaction a 5'-end triphospho-ribonucleoside in mRNA + H2O = a 5'-end phospho-ribonucleoside in mRNA + diphosphate + H(+). It carries out the reaction a 5'-end NAD(+)-phospho-ribonucleoside in mRNA + H2O = a 5'-end phospho-ribonucleoside in mRNA + NAD(+) + H(+). The enzyme catalyses a 5'-end NAD(+)-phospho-ribonucleoside in snoRNA + H2O = a 5'-end phospho-ribonucleoside in snoRNA + NAD(+) + H(+). The catalysed reaction is a 5'-end (N(7)-methyl 5'-triphosphoguanosine)-ribonucleoside-ribonucleotide in mRNA + H2O = a (N(7)-methyl 5'-triphosphoguanosine)-nucleoside + a 5'-end phospho-ribonucleoside in mRNA + H(+). It catalyses the reaction a 5'-end FAD-phospho-ribonucleoside in mRNA + H2O = a 5'-end phospho-ribonucleoside in mRNA + FAD + H(+). It carries out the reaction a 5'-end CoA-ribonucleoside in mRNA + H2O = 3'-dephospho-CoA + a 5'-end phospho-ribonucleoside in mRNA + H(+). Decapping enzyme for NAD-capped RNAs: specifically hydrolyzes the nicotinamide adenine dinucleotide (NAD) cap from a subset of RNAs by removing the entire NAD moiety from the 5'-end of an NAD-capped RNA. The NAD-cap is present at the 5'-end of some RNAs and snoRNAs. In contrast to the canonical 5'-end N7 methylguanosine (m7G) cap, the NAD cap promotes mRNA decay. Preferentially acts on NAD-capped transcripts in response to environmental stress. Also acts as a non-canonical decapping enzyme that removes the entire cap structure of m7G capped or incompletely capped RNAs and mediates their subsequent degradation. Specifically degrades pre-mRNAs with a defective 5'-end m7G cap and is part of a pre-mRNA capping quality control. Has decapping activity toward incomplete 5'-end m7G cap mRNAs such as unmethylated 5'-end-capped RNA (cap0), while it has no activity toward 2'-O-ribose methylated m7G cap (cap1). In contrast to canonical decapping enzymes DCP2 and NUDT16, which cleave the cap within the triphosphate linkage, the decapping activity releases the entire cap structure GpppN and a 5'-end monophosphate RNA. Also has 5'-3' exoribonuclease activities: The 5'-end monophosphate RNA is then degraded by the 5'-3' exoribonuclease activity, enabling this enzyme to decap and degrade incompletely capped mRNAs. Also possesses RNA 5'-pyrophosphohydrolase activity by hydrolyzing the 5'-end triphosphate to release pyrophosphates. Exhibits decapping activity towards FAD-capped RNAs. Exhibits decapping activity towards dpCoA-capped RNAs in vitro. The sequence is that of Decapping and exoribonuclease protein from Homo sapiens (Human).